The chain runs to 108 residues: Ig kappa chain V region 120 (108 aa).

The framework-1 stretch occupies residues 1 to 23; sequence AFELTQTPSSVEAAVGGTVTIKC. The complementarity-determining-1 stretch occupies residues 24–34; that stretch reads QSSQSIGTYLA. The interval 35–49 is framework-2; it reads WYZZKPGQPPKLLIY. The tract at residues 50–56 is complementarity-determining-2; it reads RASTLAS. A framework-3 region spans residues 57-88; the sequence is GVSSRFKGSGSGTEFTLTISGVECADAATYYC. Residues 89-97 are complementarity-determining-3; it reads QGTYYZSAS. The tract at residues 98–107 is framework-4; that stretch reads FGGGTEVVVK.

The sequence is that of Ig kappa chain V region 120 from Oryctolagus cuniculus (Rabbit).